A 529-amino-acid polypeptide reads, in one-letter code: Bifunctional purine biosynthesis protein PurH (529 aa).

Residues 1 to 148 (MQQRRPVRRA…KNHRDVAIVV (148 aa)) enclose the MGS-like domain. Lysine 287 is modified (N6-acetyllysine).

This sequence belongs to the PurH family.

It carries out the reaction (6R)-10-formyltetrahydrofolate + 5-amino-1-(5-phospho-beta-D-ribosyl)imidazole-4-carboxamide = 5-formamido-1-(5-phospho-D-ribosyl)imidazole-4-carboxamide + (6S)-5,6,7,8-tetrahydrofolate. The catalysed reaction is IMP + H2O = 5-formamido-1-(5-phospho-D-ribosyl)imidazole-4-carboxamide. It participates in purine metabolism; IMP biosynthesis via de novo pathway; 5-formamido-1-(5-phospho-D-ribosyl)imidazole-4-carboxamide from 5-amino-1-(5-phospho-D-ribosyl)imidazole-4-carboxamide (10-formyl THF route): step 1/1. Its pathway is purine metabolism; IMP biosynthesis via de novo pathway; IMP from 5-formamido-1-(5-phospho-D-ribosyl)imidazole-4-carboxamide: step 1/1. In Escherichia coli O6:K15:H31 (strain 536 / UPEC), this protein is Bifunctional purine biosynthesis protein PurH.